An 80-amino-acid chain; its full sequence is uncharacterized protein (80 aa).

This sequence belongs to the 2-oxoacid dehydrogenase family.

This is an uncharacterized protein from Mycobacterium tuberculosis (strain CDC 1551 / Oshkosh).